Reading from the N-terminus, the 294-residue chain is Survival motor neuron protein (294 aa).

Gly residues predominate over residues 1-12 (MAMSSGGSGGGV). A disordered region spans residues 1 to 32 (MAMSSGGSGGGVPEQEDSVLFRRGTGQSDDSD). N-acetylalanine is present on Ala-2. A phosphoserine; by PKA mark is found at Ser-4, Ser-5, and Ser-8. Residues 13–44 (PEQEDSVLFRRGTGQSDDSDIWDDTALIKAYD) are P1 (binding site for GEMIN2). At Thr-25 the chain carries Phosphothreonine. A phosphoserine mark is found at Ser-28 and Ser-31. Residue Lys-51 forms a Glycyl lysine isopeptide (Lys-Gly) (interchain with G-Cter in SUMO2) linkage. Residues 58–88 (DICETSGKPKTTPKRKPAKKNKSQKKNTAAP) are disordered. Residues 68–82 (TTPKRKPAKKNKSQK) are compositionally biased toward basic residues. Residue Thr-69 is modified to Phosphothreonine. The residue at position 85 (Thr-85) is a Phosphothreonine; by PKA. In terms of domain architecture, Tudor spans 91 to 151 (QWKVGDKCSA…LSPISEVANN (61 aa)). Residues 97–209 (KCSAIWSEDG…MPGPRLGPGK (113 aa)) are required for interaction with RPP20/POP7. Residues 156–166 (AQENENESQVS) are compositionally biased toward low complexity. Positions 156-222 (AQENENESQV…KFNGPPPPPP (67 aa)) are disordered. Ser-187 carries the phosphoserine; by PKA modification. Positions 194–204 (LPPPPPMPGPR) are enriched in pro residues. Residue Lys-209 forms a Glycyl lysine isopeptide (Lys-Gly) (interchain with G-Cter in SUMO2) linkage. Residues 240–267 (PPIIPPPPPICPDSLDDADALGSMLISW) are P2 (binding site for SM B). Residues 279 to 294 (GFRQNQKEGRCSHSLN) form a required for interaction with SYNCRIP region.

Belongs to the SMN family. Homooligomer; may form higher order homooligomers in the dimer to octamer range. Part of the core SMN complex that contains SMN1, GEMIN2/SIP1, DDX20/GEMIN3, GEMIN4, GEMIN5, GEMIN6, GEMIN7, GEMIN8 and STRAP/UNRIP. Part of the SMN-Sm complex that contains SMN1, GEMIN2/SIP1, DDX20/GEMIN3, GEMIN4, GEMIN5, GEMIN6, GEMIN7, GEMIN8, STRAP/UNRIP and the Sm proteins SNRPB, SNRPD1, SNRPD2, SNRPD3, SNRPE, SNRPF and SNRPG. Component of an import snRNP complex composed of KPNB1, RNUT1, SMN1 and ZNF259. Interacts with DDX20, FBL, NOLA1, RNUT1, SYNCRIP and with several spliceosomal snRNP core Sm proteins, including SNRPB, SNRPD1, SNRPD2, SNRPD3, SNRPE and ILF3. Interacts with GEMIN2; the interaction is direct. Interacts with GEMIN3; the interaction is direct. Interacts with GEMIN8; the interaction is direct. Interacts with SNRPB; the interaction is direct. Interacts (via Tudor domain) with SNRPD1 (via C-terminus); the interaction is direct. Interacts with SNRPD2; the interaction is direct. Interacts (via Tudor domain) with SNRPD3 (via C-terminus); the interaction is direct. Interacts with SNRPE; the interaction is direct. Interacts with OSTF1, LSM10, LSM11 and RPP20/POP7. Interacts (via C-terminal region) with ZPR1 (via C-terminal region). Interacts (via Tudor domain) with COIL. Interacts with SETX; recruits SETX to POLR2A. Interacts with POLR2A (via the C-terminal domain (CTD)). Interacts with PRMT5. Interacts with XRN2. Interacts (via C-terminus) with FMR1 (via C-terminus); the interaction is direct and occurs in a RNA-independent manner. Interacts (via Tudor domain) with SF3B2 ('Arg-508'-methylated form). Interacts with WRAP53/TCAB1. Interacts (via Tudor domain) with ELAVL4 in an RNA-independent manner; the interaction is required for localization of ELAVL4 to RNA granules. Interacts with FRG1.

It is found in the nucleus. The protein localises to the gem. Its subcellular location is the cajal body. It localises to the cytoplasm. The protein resides in the cytoplasmic granule. It is found in the perikaryon. The protein localises to the cell projection. Its subcellular location is the neuron projection. It localises to the axon. The protein resides in the myofibril. It is found in the sarcomere. The protein localises to the z line. The SMN complex catalyzes the assembly of small nuclear ribonucleoproteins (snRNPs), the building blocks of the spliceosome, and thereby plays an important role in the splicing of cellular pre-mRNAs. Most spliceosomal snRNPs contain a common set of Sm proteins SNRPB, SNRPD1, SNRPD2, SNRPD3, SNRPE, SNRPF and SNRPG that assemble in a heptameric protein ring on the Sm site of the small nuclear RNA to form the core snRNP (Sm core). In the cytosol, the Sm proteins SNRPD1, SNRPD2, SNRPE, SNRPF and SNRPG are trapped in an inactive 6S pICln-Sm complex by the chaperone CLNS1A that controls the assembly of the core snRNP. To assemble core snRNPs, the SMN complex accepts the trapped 5Sm proteins from CLNS1A forming an intermediate. Binding of snRNA inside 5Sm ultimately triggers eviction of the SMN complex, thereby allowing binding of SNRPD3 and SNRPB to complete assembly of the core snRNP. Within the SMN complex, SMN1 acts as a structural backbone and together with GEMIN2 it gathers the Sm complex subunits. Ensures the correct splicing of U12 intron-containing genes that may be important for normal motor and proprioceptive neurons development. Also required for resolving RNA-DNA hybrids created by RNA polymerase II, that form R-loop in transcription terminal regions, an important step in proper transcription termination. May also play a role in the metabolism of small nucleolar ribonucleoprotein (snoRNPs). The protein is Survival motor neuron protein (SMN1) of Macaca fascicularis (Crab-eating macaque).